A 219-amino-acid chain; its full sequence is Small ribosomal subunit protein uS2m (219 aa).

The protein belongs to the universal ribosomal protein uS2 family. In terms of assembly, component of the mitochondrial ribosome small subunit.

Its subcellular location is the mitochondrion. This chain is Small ribosomal subunit protein uS2m (RPS2), found in Arabidopsis thaliana (Mouse-ear cress).